Consider the following 1273-residue polypeptide: Cullin-associated NEDD8-dissociated protein 2 (1273 aa).

Ser2 bears the N-acetylserine mark. 26 HEAT repeats span residues 2 to 36, 37 to 74, 82 to 119, 121 to 157, 167 to 205, 209 to 246, 248 to 284, 292 to 329, 364 to 405, 409 to 446, 469 to 506, 554 to 591, 602 to 641, 685 to 722, 727 to 764, 768 to 807, 809 to 850, 894 to 931, 933 to 968, 970 to 1003, 1004 to 1040, 1044 to 1081, 1085 to 1121, 1142 to 1178, 1194 to 1231, and 1241 to 1273; these read STGA…LDPL, PWLQ…ELQK, DSER…KVKE, QVEN…ELPP, SVCR…RLGA, TFHA…ACST, LFVE…SVGR, AHLD…KCPK, TEDS…SRPD, DFHC…HTRP, AQVP…VLPG, PHLP…TLWP, PYVG…HLGD, PILA…SQGL, PAVR…TQPA, EVSG…TRPP, VEYS…ALSA, GPQR…GNLP, FLPF…DNLK, YVED…LVFV, NPPF…DQPH, PLLK…NKPS, DLLD…DDGL, LDIC…LCPA, TCTA…NPEV, and STQI…MELS. Residues 352 to 383 form a disordered region; it reads YNHDSDEEEQMETEDSEFSEQESEDEYSDDDD. The segment covering 356–383 has biased composition (acidic residues); the sequence is SDEEEQMETEDSEFSEQESEDEYSDDDD.

Belongs to the CAND family. Binds TBP, CNOT3 and UBE3C. Ubiquitinated and targeted for proteasomal degradation. Detected in heart and skeletal muscle.

It localises to the nucleus. Its function is as follows. Probable assembly factor of SCF (SKP1-CUL1-F-box protein) E3 ubiquitin ligase complexes that promotes the exchange of the substrate-recognition F-box subunit in SCF complexes, thereby playing a key role in the cellular repertoire of SCF complexes. The sequence is that of Cullin-associated NEDD8-dissociated protein 2 (Cand2) from Rattus norvegicus (Rat).